The sequence spans 306 residues: SDS degradation transcriptional activation protein (306 aa).

The 59-residue stretch at 1 to 59 (MNDLRQLRHFVALAEHGHFARAAEAVNLSQPALSRSIQALENGLGCRLLDRGPRQVSLT) folds into the HTH lysR-type domain. A DNA-binding region (H-T-H motif) is located at residues 19–38 (FARAAEAVNLSQPALSRSIQ).

The protein belongs to the LysR transcriptional regulatory family.

In terms of biological role, activates the transcription of the sdsA gene for sodium dodecyl sulfate (SDS) degradation. In Pseudomonas sp. (strain ATCC 19151), this protein is SDS degradation transcriptional activation protein (sdsB).